A 506-amino-acid chain; its full sequence is Ribose import ATP-binding protein RbsA (506 aa).

ABC transporter domains lie at 5 to 237 (VQLI…VGRP) and 249 to 492 (PFGA…LAIE). 37 to 44 (GENGAGKS) is an ATP binding site.

Belongs to the ABC transporter superfamily. Ribose importer (TC 3.A.1.2.1) family. As to quaternary structure, the complex is composed of an ATP-binding protein (RbsA), two transmembrane proteins (RbsC) and a solute-binding protein (RbsB).

It localises to the cell inner membrane. It catalyses the reaction D-ribose(out) + ATP + H2O = D-ribose(in) + ADP + phosphate + H(+). Functionally, part of the ABC transporter complex RbsABC involved in ribose import. Responsible for energy coupling to the transport system. In Chelativorans sp. (strain BNC1), this protein is Ribose import ATP-binding protein RbsA.